Reading from the N-terminus, the 807-residue chain is Sucrose synthase 1 (807 aa).

The segment at 272–748 (MMFNVVILSP…GLKRIYEKYT (477 aa)) is GT-B glycosyltransferase.

Belongs to the glycosyltransferase 1 family. Plant sucrose synthase subfamily. Forms homotetramers. In endosperm it forms both homotetramers and heterotetramers with SS2, all three possible heterotetramers are formed. As to expression, highly expressed in developing endosperm and in roots and, at lower levels, in coleoptiles and aleurone. In 3 day old roots it is detected in cap cells and along the vascular strand, starting just after the meristemic region. In 9 day old leaves it is found in the phloem. In seeds it is distributed throughout the endosperm and also found in the assimilate-unloading tissues, the nucellar projection, the vascular area and at a high concentration in the chalazal region.

The catalysed reaction is an NDP-alpha-D-glucose + D-fructose = a ribonucleoside 5'-diphosphate + sucrose + H(+). Sucrose-cleaving enzyme that provides UDP-glucose and fructose for various metabolic pathways. The chain is Sucrose synthase 1 (SS1) from Hordeum vulgare (Barley).